The following is a 462-amino-acid chain: Elongation factor 1-alpha, somatic form (462 aa).

Glycine 2 is subject to N,N,N-trimethylglycine. Residues 5–242 (KTHINIVVIG…DCILPPSRPT (238 aa)) form the tr-type G domain. The interval 14-21 (GHVDSGKS) is G1. 14-21 (GHVDSGKS) contributes to the GTP binding site. Residues 70–74 (GITID) are G2. Residues 91 to 94 (DAPG) form a G3 region. Residues 91–95 (DAPGH) and 153–156 (NKMD) contribute to the GTP site. The segment at 153–156 (NKMD) is G4. Residues 194 to 196 (SGW) form a G5 region. Glutamate 301 and glutamate 374 each carry 5-glutamyl glycerylphosphorylethanolamine.

Belongs to the TRAFAC class translation factor GTPase superfamily. Classic translation factor GTPase family. EF-Tu/EF-1A subfamily.

It localises to the cytoplasm. In terms of biological role, this protein promotes the GTP-dependent binding of aminoacyl-tRNA to the A-site of ribosomes during protein biosynthesis. This is Elongation factor 1-alpha, somatic form (eef1as) from Xenopus laevis (African clawed frog).